Here is a 455-residue protein sequence, read N- to C-terminus: Ribulose bisphosphate carboxylase large chain (455 aa).

Lysine 5 is subject to N6,N6,N6-trimethyllysine. Substrate-binding residues include asparagine 114 and threonine 164. The Proton acceptor role is filled by lysine 166. Lysine 168 provides a ligand contact to substrate. Mg(2+)-binding residues include lysine 192, aspartate 194, and glutamate 195. Residue lysine 192 is modified to N6-carboxylysine. Catalysis depends on histidine 285, which acts as the Proton acceptor. Arginine 286, histidine 318, and serine 370 together coordinate substrate.

It belongs to the RuBisCO large chain family. Type I subfamily. Heterohexadecamer of 8 large chains and 8 small chains; disulfide-linked. The disulfide link is formed within the large subunit homodimers. It depends on Mg(2+) as a cofactor. Post-translationally, the disulfide bond which can form in the large chain dimeric partners within the hexadecamer appears to be associated with oxidative stress and protein turnover.

The protein localises to the plastid. It is found in the chloroplast. The enzyme catalyses 2 (2R)-3-phosphoglycerate + 2 H(+) = D-ribulose 1,5-bisphosphate + CO2 + H2O. It carries out the reaction D-ribulose 1,5-bisphosphate + O2 = 2-phosphoglycolate + (2R)-3-phosphoglycerate + 2 H(+). Functionally, ruBisCO catalyzes two reactions: the carboxylation of D-ribulose 1,5-bisphosphate, the primary event in carbon dioxide fixation, as well as the oxidative fragmentation of the pentose substrate in the photorespiration process. Both reactions occur simultaneously and in competition at the same active site. This Lupinus cosentinii (West Australian blue lupine) protein is Ribulose bisphosphate carboxylase large chain.